Consider the following 473-residue polypeptide: 3-isopropylmalate dehydratase large subunit (473 aa).

[4Fe-4S] cluster contacts are provided by Cys-351, Cys-414, and Cys-417.

This sequence belongs to the aconitase/IPM isomerase family. LeuC type 1 subfamily. Heterodimer of LeuC and LeuD. Requires [4Fe-4S] cluster as cofactor.

The enzyme catalyses (2R,3S)-3-isopropylmalate = (2S)-2-isopropylmalate. Its pathway is amino-acid biosynthesis; L-leucine biosynthesis; L-leucine from 3-methyl-2-oxobutanoate: step 2/4. Functionally, catalyzes the isomerization between 2-isopropylmalate and 3-isopropylmalate, via the formation of 2-isopropylmaleate. The chain is 3-isopropylmalate dehydratase large subunit from Acidovorax sp. (strain JS42).